Reading from the N-terminus, the 280-residue chain is Chlorophyll a-b binding protein CP29 (280 aa).

Positions 1–42 are disordered; that stretch reads MVFKFPTPPGTQKKAGTTATKPAPKATTKKVATSTGTRSGGV. Position 2 is an N-acetylvaline (valine 2). Threonine 7 carries the post-translational modification Phosphothreonine; in State 1 and State 2. Low complexity predominate over residues 10-37; sequence GTQKKAGTTATKPAPKATTKKVATSTGT. Threonine 17 bears the Phosphothreonine; in State 2 mark. Position 33 is a phosphothreonine; in State 1 and State 2 (threonine 33). Tyrosine 47 serves as a coordination point for chlorophyll b. Residues phenylalanine 73 and serine 79 each contribute to the chlorophyll a site. Serine 103 is subject to Phosphoserine; in State 2. Positions 137 and 140 each coordinate chlorophyll a. A run of 2 helical transmembrane segments spans residues 143 to 163 and 176 to 196; these read WAML…VSWV and AGLS…ILVG. Chlorophyll b is bound by residues serine 183, glutamate 199, and arginine 202. Chlorophyll a contacts are provided by glutamate 238, histidine 241, arginine 243, and glutamine 255. A helical transmembrane segment spans residues 244–264; the sequence is LAMVSFFGYGVQALSTGEGAL.

It belongs to the light-harvesting chlorophyll a/b-binding (LHC) protein family. The LHC complex consists of chlorophyll a-b binding proteins. It depends on Binds at least 14 chlorophylls (8 Chl-a and 6 Chl-b) and carotenoids such as lutein and neoxanthin. as a cofactor. In terms of processing, reversible phosphorylation plays a role in the State transition process and determines the affinity of LHCII for PSI and PSII.

It localises to the plastid. The protein localises to the chloroplast thylakoid membrane. In terms of biological role, the light-harvesting complex (LHC) functions as a light receptor, it captures and delivers excitation energy to photosystems with which it is closely associated. CP29 facilitates the State 1 to State 2 transition, where State I is induced by excess photosystem I (PSI) light and State 2 is induced by excess photosystem II (PSII) light. This Chlamydomonas reinhardtii (Chlamydomonas smithii) protein is Chlorophyll a-b binding protein CP29.